A 188-amino-acid polypeptide reads, in one-letter code: MKIGVLGVQGDVREHVEALHKLGVETLIVKLPEQLDMVDGLILPGGESTTMIRILKEMDMDEKLVERINNGLPVFATCAGVILLAKRIENYSQEKLGVLDITVERNAYGRQVESFETFVEIPAVGKDPFRAIFIRAPRIVETGKNVEILATYDYDPVLVKEGNILACTFHPELTDDLRLHRYFLEMVK.

Residue 46 to 48 (GES) coordinates L-glutamine. The Nucleophile role is filled by C78. Residues R105 and 134 to 135 (IR) each bind L-glutamine. Active-site charge relay system residues include H170 and E172.

The protein belongs to the glutaminase PdxT/SNO family. In the presence of PdxS, forms a dodecamer of heterodimers. Only shows activity in the heterodimer.

The enzyme catalyses aldehydo-D-ribose 5-phosphate + D-glyceraldehyde 3-phosphate + L-glutamine = pyridoxal 5'-phosphate + L-glutamate + phosphate + 3 H2O + H(+). It carries out the reaction L-glutamine + H2O = L-glutamate + NH4(+). The protein operates within cofactor biosynthesis; pyridoxal 5'-phosphate biosynthesis. Functionally, catalyzes the hydrolysis of glutamine to glutamate and ammonia as part of the biosynthesis of pyridoxal 5'-phosphate. The resulting ammonia molecule is channeled to the active site of PdxS. This Thermotoga sp. (strain RQ2) protein is Pyridoxal 5'-phosphate synthase subunit PdxT.